The chain runs to 243 residues: Nuclear cap-binding protein subunit 2 (243 aa).

MRNA contacts are provided by residues Y14, Y37, 106–110 (RVDFD), 117–121 (RQWGR), and 127–128 (QV). The 79-residue stretch at 34–112 (VTVYVGNMSF…RPIRVDFDWG (79 aa)) folds into the RRM domain. Disordered regions lie at residues 120 to 144 (GRGR…GGYG) and 161 to 243 (GGAF…RRRR). Composition is skewed to basic and acidic residues over residues 128–138 (VRDEYRTDYDP) and 173–228 (DRGD…REKG).

This sequence belongs to the RRM NCBP2 family. In terms of assembly, component of the nuclear cap-binding complex (CBC), a heterodimer composed of ABH1/CBP80 and CBP20 that interacts with m7GpppG-capped RNA.

It localises to the nucleus. It is found in the cytoplasm. Component of the cap-binding complex (CBC), which binds co-transcriptionally to the 5' cap of pre-mRNAs and is involved in various processes such as pre-mRNA splicing and RNA-mediated gene silencing (RNAi) by microRNAs (miRNAs). The CBC complex is involved in miRNA-mediated RNA interference and is required for primary miRNA processing. In the CBC complex, CBP20 recognizes and binds capped RNAs (m7GpppG-capped RNA) but requires ABH1/CBP80 to stabilize the movement of its N-terminal loop and lock the CBC into a high affinity cap-binding state with the cap structure. CBP20 also plays a role in stabilization of ABH1/CBP80 and ABH1/CBP80 localization to the nucleus. The protein is Nuclear cap-binding protein subunit 2 (CBP20) of Oryza sativa subsp. japonica (Rice).